Reading from the N-terminus, the 186-residue chain is Elongation factor P (186 aa).

A glycan (N-alpha-linked (Rha) arginine) is linked at Arg32.

This sequence belongs to the elongation factor P family. Glycosylated ar Arg-32 by EarP: arginine rhamnosylation is required for EF-P function and rescue of polyproline stalled ribosomes.

The protein localises to the cytoplasm. The protein operates within protein biosynthesis; polypeptide chain elongation. In terms of biological role, involved in peptide bond synthesis. Stimulates efficient translation and peptide-bond synthesis on native or reconstituted 70S ribosomes in vitro. Probably functions indirectly by altering the affinity of the ribosome for aminoacyl-tRNA, thus increasing their reactivity as acceptors for peptidyl transferase. In Shewanella oneidensis (strain ATCC 700550 / JCM 31522 / CIP 106686 / LMG 19005 / NCIMB 14063 / MR-1), this protein is Elongation factor P.